A 275-amino-acid chain; its full sequence is MAEEHKHDESVIAPEPAVEVVERESLMDKISEKIHHGGDSSSSSSSSDDEDEKKKTKKPSSPSSSMKSKVYRLFGREQPVHKVLGGGKPADIFMWKNKKMSGGVLGGATAAWVVFELMEYHLLTLLCHVMIVVLAVLFLWSNATMFINKSPPKIPEVHIPEEPILQLASGLRIEINRGFSSLREIASGRDLKKFLIAIAGLWVLSILGGCFNFLTLAYIALVLLFTVPLAYDKYEDKVDPLGEKAMIELKKQYAVLDEKVLSKIPLGPLKNKKKD.

Composition is skewed to basic and acidic residues over residues 1–10 (MAEEHKHDES) and 20–38 (VVER…HHGG). The interval 1–68 (MAEEHKHDES…PSSPSSSMKS (68 aa)) is disordered. N-acetylalanine is present on Ala-2. Residues 59–68 (PSSPSSSMKS) show a composition bias toward low complexity. Positions 89–274 (PADIFMWKNK…PLGPLKNKKK (186 aa)) constitute a Reticulon domain. 3 helical membrane-spanning segments follow: residues 99–119 (KMSG…ELME), 120–140 (YHLL…LFLW), and 194–214 (FLIA…FNFL).

Interacts with VirB2. As to expression, predominantly expressed in root tissues.

The protein localises to the endoplasmic reticulum membrane. Its subcellular location is the cell membrane. Its function is as follows. Plays a role in the Agrobacterium-mediated plant transformation via its interaction with VirB2, the major component of the T-pilus. In Arabidopsis thaliana (Mouse-ear cress), this protein is Reticulon-like protein B1 (RTNLB1).